The following is a 733-amino-acid chain: Polyribonucleotide nucleotidyltransferase (733 aa).

Mg(2+) contacts are provided by Asp-488 and Asp-494. In terms of domain architecture, KH spans 555–614 (PRIEMMTIPVEKIREVIGSGGKVIREIVEQTGAKINIEDDGTIKIASPDTKSIETAKSWI). Residues 624–692 (GTIYQGTVVK…ERGKIRLSMK (69 aa)) form the S1 motif domain. A disordered region spans residues 698 to 733 (TGKEIPQDDLIKTEKEQNPDEKNKSEKKRHNRKKED). Positions 702-721 (IPQDDLIKTEKEQNPDEKNK) are enriched in basic and acidic residues. Residues 722-733 (SEKKRHNRKKED) show a composition bias toward basic residues.

This sequence belongs to the polyribonucleotide nucleotidyltransferase family. The cofactor is Mg(2+).

The protein resides in the cytoplasm. It carries out the reaction RNA(n+1) + phosphate = RNA(n) + a ribonucleoside 5'-diphosphate. Its function is as follows. Involved in mRNA degradation. Catalyzes the phosphorolysis of single-stranded polyribonucleotides processively in the 3'- to 5'-direction. The polypeptide is Polyribonucleotide nucleotidyltransferase (Bartonella bacilliformis (strain ATCC 35685 / KC583 / Herrer 020/F12,63)).